The chain runs to 101 residues: Urease subunit beta (101 aa).

The protein belongs to the urease beta subunit family. As to quaternary structure, heterotrimer of UreA (gamma), UreB (beta) and UreC (alpha) subunits. Three heterotrimers associate to form the active enzyme.

It is found in the cytoplasm. It catalyses the reaction urea + 2 H2O + H(+) = hydrogencarbonate + 2 NH4(+). The protein operates within nitrogen metabolism; urea degradation; CO(2) and NH(3) from urea (urease route): step 1/1. The polypeptide is Urease subunit beta (Pseudomonas syringae pv. syringae (strain B728a)).